The following is a 673-amino-acid chain: Kinesin-like protein KIFC1 (673 aa).

Residues Ser-6, Ser-26, Ser-31, and Ser-33 each carry the phosphoserine modification. Disordered regions lie at residues Lys-23–Arg-94 and Val-109–Ala-136. The span at Thr-60–Lys-86 shows a compositional bias: polar residues. A coiled-coil region spans residues Gln-142 to Glu-306. The region spanning Asn-310 to Cys-663 is the Kinesin motor domain. Positions Pro-325–Phe-372 are disordered. Phosphothreonine is present on Thr-359. Residue Gly-410–Thr-417 coordinates ATP.

It belongs to the TRAFAC class myosin-kinesin ATPase superfamily. Kinesin family. NCD subfamily. In terms of assembly, binds NUBP1 and NUBP2. Interacts with PPP1R42.

The protein localises to the nucleus. It localises to the cytoplasm. The protein resides in the cytoskeleton. Its subcellular location is the microtubule organizing center. It is found in the centrosome. The protein localises to the spindle. It localises to the early endosome. Functionally, minus end-directed microtubule-dependent motor required for bipolar spindle formation. May contribute to movement of early endocytic vesicles. Regulates cilium formation and structure. This Homo sapiens (Human) protein is Kinesin-like protein KIFC1 (KIFC1).